The chain runs to 239 residues: Ribonuclease PH (239 aa).

Phosphate contacts are provided by residues arginine 86 and 124 to 126; that span reads GTR.

It belongs to the RNase PH family. As to quaternary structure, homohexameric ring arranged as a trimer of dimers.

It carries out the reaction tRNA(n+1) + phosphate = tRNA(n) + a ribonucleoside 5'-diphosphate. Phosphorolytic 3'-5' exoribonuclease that plays an important role in tRNA 3'-end maturation. Removes nucleotide residues following the 3'-CCA terminus of tRNAs; can also add nucleotides to the ends of RNA molecules by using nucleoside diphosphates as substrates, but this may not be physiologically important. Probably plays a role in initiation of 16S rRNA degradation (leading to ribosome degradation) during starvation. The protein is Ribonuclease PH of Rickettsia bellii (strain RML369-C).